The primary structure comprises 140 residues: Small ribosomal subunit protein uS12 (140 aa).

Position 102 is a 3-methylthioaspartic acid (Asp102).

The protein belongs to the universal ribosomal protein uS12 family. As to quaternary structure, part of the 30S ribosomal subunit. Contacts proteins S8 and S17. May interact with IF1 in the 30S initiation complex.

Functionally, with S4 and S5 plays an important role in translational accuracy. In terms of biological role, interacts with and stabilizes bases of the 16S rRNA that are involved in tRNA selection in the A site and with the mRNA backbone. Located at the interface of the 30S and 50S subunits, it traverses the body of the 30S subunit contacting proteins on the other side and probably holding the rRNA structure together. The combined cluster of proteins S8, S12 and S17 appears to hold together the shoulder and platform of the 30S subunit. The polypeptide is Small ribosomal subunit protein uS12 (Geobacillus sp. (strain WCH70)).